Here is a 144-residue protein sequence, read N- to C-terminus: uncharacterized protein (144 aa).

Residues 1 to 16 (MRKFLIVLLLPLLVLA) form the signal peptide.

This is an uncharacterized protein from Aquifex aeolicus (strain VF5).